We begin with the raw amino-acid sequence, 324 residues long: NADH-ubiquinone oxidoreductase chain 1 (324 aa).

Helical transmembrane passes span 10-30 (MIMT…LTLV), 76-96 (FLFI…WTPL), 107-127 (LGLL…LWSG), 143-163 (VAQT…TIML), 178-198 (PMYL…STLA), 229-249 (LFFL…ITLF), 260-280 (ELFS…FLWI), and 300-320 (FLPL…SYAG).

Belongs to the complex I subunit 1 family.

Its subcellular location is the mitochondrion inner membrane. The catalysed reaction is a ubiquinone + NADH + 5 H(+)(in) = a ubiquinol + NAD(+) + 4 H(+)(out). Functionally, core subunit of the mitochondrial membrane respiratory chain NADH dehydrogenase (Complex I) that is believed to belong to the minimal assembly required for catalysis. Complex I functions in the transfer of electrons from NADH to the respiratory chain. The immediate electron acceptor for the enzyme is believed to be ubiquinone. The chain is NADH-ubiquinone oxidoreductase chain 1 (MT-ND1) from Coturnix japonica (Japanese quail).